The primary structure comprises 334 residues: MSLDIDQIALHQMIKLDEQTLELVLRDTPLDVSPAVEDMMAELHRVYSAKSKAYGIFTPESELADAVRSCRRGNENFLAFSRTATGRLRDELAKYPFAEGGTVLFCQYRYLAVEYLLIAVLGTCQSMLVNEQLDISSTQYLDIHHADIVACIDLTEWETQPASTRYLTFLKGRVGRKVSDFFMDFLAAAEGLDTKAQNRGLLQAVDDYCTDAALDNRQRQEVRQQVHSYCKEQLQAGEDIALVELSATLAPVSDKTFQAFSSEQGYALEETFPADRGTLLQLTKYAGSGGGVTLNFDAHLLGERIFWDPATDTLTIKGTPPNLRDQLTRRQNGK.

Belongs to the YejK family.

It is found in the cytoplasm. Its subcellular location is the nucleoid. This chain is Nucleoid-associated protein SG1574, found in Sodalis glossinidius (strain morsitans).